The chain runs to 436 residues: Xylose isomerase (436 aa).

Residues H100 and D103 contribute to the active site. Mg(2+)-binding residues include E231, E267, H270, D295, D306, D308, and D338.

This sequence belongs to the xylose isomerase family. Homotetramer. Requires Mg(2+) as cofactor.

It is found in the cytoplasm. It carries out the reaction alpha-D-xylose = alpha-D-xylulofuranose. The chain is Xylose isomerase from Ruegeria sp. (strain TM1040) (Silicibacter sp.).